A 589-amino-acid polypeptide reads, in one-letter code: Threonine--tRNA ligase (589 aa).

The catalytic stretch occupies residues 191-487; it reads DHRKIGKNLG…LLEQTKGNFP (297 aa). C284, H335, and H464 together coordinate Zn(2+).

It belongs to the class-II aminoacyl-tRNA synthetase family. As to quaternary structure, homodimer. Zn(2+) serves as cofactor.

It localises to the cytoplasm. It catalyses the reaction tRNA(Thr) + L-threonine + ATP = L-threonyl-tRNA(Thr) + AMP + diphosphate + H(+). Catalyzes the attachment of threonine to tRNA(Thr) in a two-step reaction: L-threonine is first activated by ATP to form Thr-AMP and then transferred to the acceptor end of tRNA(Thr). Also edits incorrectly charged L-seryl-tRNA(Thr). The chain is Threonine--tRNA ligase from Mycoplasmopsis pulmonis (strain UAB CTIP) (Mycoplasma pulmonis).